Here is a 765-residue protein sequence, read N- to C-terminus: Periplasmic beta-glucosidase (765 aa).

The first 20 residues, 1-20 (MKWLCSVGIAVSLALQPALA), serve as a signal peptide directing secretion. Asp-287 is an active-site residue.

Belongs to the glycosyl hydrolase 3 family.

It localises to the periplasm. The enzyme catalyses Hydrolysis of terminal, non-reducing beta-D-glucosyl residues with release of beta-D-glucose.. The chain is Periplasmic beta-glucosidase (bglX) from Escherichia coli (strain K12).